A 596-amino-acid chain; its full sequence is Bromodomain-containing protein 9 (596 aa).

The segment covering 1–10 (MGKKHKKHKA) has biased composition (basic residues). 2 disordered regions span residues 1 to 26 (MGKK…PLEK) and 38 to 137 (EVTE…AENE). The span at 50 to 62 (SYYDDRSDHERER) shows a compositional bias: basic and acidic residues. S56 bears the Phosphoserine mark. The segment covering 63-73 (HREKKKKKKKK) has biased composition (basic residues). The segment covering 74-85 (SEKEKHLDEEER) has biased composition (basic and acidic residues). Basic residues predominate over residues 86–97 (RKRKEEKKRKRE). Positions 111–126 (DPGKKVEVEPPPDRPV) are enriched in basic and acidic residues. A Bromo domain is found at 136 to 240 (NESTPIQRLL…HAGFKMMSKA (105 aa)). Residues 214–216 (TYN) form a histone H4K5ac H4K8ac and histone H4K5bu H4K8bu binding region. K372 is subject to N6-acetyllysine; alternate. K372 participates in a covalent cross-link: Glycyl lysine isopeptide (Lys-Gly) (interchain with G-Cter in SUMO2); alternate. The interval 536 to 596 (AQAERGGSRP…SPEPAAPAKN (61 aa)) is disordered. The segment covering 543-555 (SRPSSNLSSLSTA) has biased composition (low complexity). Phosphoserine is present on residues S565 and S587.

Binds acetylated histones H3 and H4. Binds butyrylated histone H4. Component of the multiprotein chromatin-remodeling subcomplex SWI/SNF called GBAF, which includes at least BICRA or BICRAL (mutually exclusive), BRD9, SS18, the core BAF subunits, SMARCA2/BRM, SMARCA4/BRG1/BAF190A, ACTL6A/BAF53, SMARCC1/BAF155, and SMARCD1/BAF60A. Interacts (via N-terminal bromodomain) with acetylated RAD54. Interacts (via C-terminus) with RAD51.

Its subcellular location is the nucleus. Plays a role in chromatin remodeling and regulation of transcription. Acts as a chromatin reader that recognizes and binds acylated histones: binds histones that are acetylated and/or butyrylated. Component of SWI/SNF chromatin remodeling subcomplex GBAF that carries out key enzymatic activities, changing chromatin structure by altering DNA-histone contacts within a nucleosome in an ATP-dependent manner. Also orchestrates the RAD51-RAD54 complex formation and thereby plays a role in homologous recombination (HR). This is Bromodomain-containing protein 9 (Brd9) from Mus musculus (Mouse).